Reading from the N-terminus, the 330-residue chain is Cathepsin S (330 aa).

Residues 1–17 form the signal peptide; the sequence is MKQLVCVLFVCSSAVTQ. The propeptide at 18 to 114 is activation peptide; sequence LHKDPTLDHH…ITYKSNPNQM (97 aa). N-linked (GlcNAc...) asparagine glycosylation occurs at N104. Intrachain disulfides connect C126-C223, C136-C179, C170-C212, and C271-C319. The active site involves C139. Active-site residues include H277 and N297.

It belongs to the peptidase C1 family.

It is found in the lysosome. Its subcellular location is the secreted. It localises to the cytoplasmic vesicle. The protein localises to the phagosome. The catalysed reaction is Similar to cathepsin L, but with much less activity on Z-Phe-Arg-|-NHMec, and more activity on the Z-Val-Val-Arg-|-Xaa compound.. Functionally, thiol protease. Key protease responsible for the removal of the invariant chain from MHC class II molecules and MHC class II antigen presentation. The bond-specificity of this proteinase is in part similar to the specificities of cathepsin L. This Saimiri boliviensis boliviensis (Bolivian squirrel monkey) protein is Cathepsin S (CTSS).